Reading from the N-terminus, the 276-residue chain is Natural cytotoxicity triggering receptor 2 (276 aa).

The N-terminal stretch at methionine 1–alanine 21 is a signal peptide. The Ig-like domain maps to glutamine 22–serine 120. Topologically, residues glutamine 22–alanine 192 are extracellular. 2 disulfides stabilise this stretch: cysteine 40–cysteine 109 and cysteine 55–cysteine 63. 2 stretches are compositionally biased toward polar residues: residues threonine 138 to valine 156 and glutamate 167 to leucine 183. The tract at residues threonine 138 to arginine 184 is disordered. Asparagine 180 carries an N-linked (GlcNAc...) asparagine glycan. A helical transmembrane segment spans residues leucine 193 to valine 213. At tryptophan 214 to leucine 276 the chain is on the cytoplasmic side.

The protein belongs to the natural cytotoxicity receptor (NCR) family. Interacts with TYROBP/DAP12. Interacts with KMT2E isoform NKp44L. Selectively expressed by activated NK cells and by in vitro cultured (i.e. activated) TCRg/d lymphoid cells.

Its subcellular location is the cell membrane. Its function is as follows. Cytotoxicity-activating receptor that may contribute to the increased efficiency of activated natural killer (NK) cells to mediate tumor cell lysis. The protein is Natural cytotoxicity triggering receptor 2 (NCR2) of Homo sapiens (Human).